Consider the following 331-residue polypeptide: Probable protein phosphatase 2C 1 (331 aa).

A disordered region spans residues 1–29 (MAASSTATRLSPPRLHAPTTPSPHLPLRR). Residues 48–292 (THLIPHPRKA…DDITVIVAQV (245 aa)) form the PPM-type phosphatase domain. Asp79, Gly80, Asp210, and Asp283 together coordinate Mn(2+). The segment at 300–331 (DEGVDEEKGQGDEQGSAVAVASSEQKEDSITT) is disordered.

This sequence belongs to the PP2C family. Mg(2+) is required as a cofactor. It depends on Mn(2+) as a cofactor.

The enzyme catalyses O-phospho-L-seryl-[protein] + H2O = L-seryl-[protein] + phosphate. It catalyses the reaction O-phospho-L-threonyl-[protein] + H2O = L-threonyl-[protein] + phosphate. The chain is Probable protein phosphatase 2C 1 from Oryza sativa subsp. japonica (Rice).